Consider the following 143-residue polypeptide: Small ribosomal subunit protein bS18m (143 aa).

Belongs to the bacterial ribosomal protein bS18 family. As to quaternary structure, component of the mitochondrial ribosome small subunit (28S) which comprises a 12S rRNA and about 30 distinct proteins.

It localises to the mitochondrion. In Bos taurus (Bovine), this protein is Small ribosomal subunit protein bS18m (MRPS18C).